We begin with the raw amino-acid sequence, 115 residues long: Flagellar transcriptional regulator FlhD (115 aa).

Belongs to the FlhD family. In terms of assembly, homodimer; disulfide-linked. Forms a heterohexamer composed of two FlhC and four FlhD subunits. Each FlhC binds a FlhD dimer, forming a heterotrimer, and a hexamer assembles by dimerization of two heterotrimers.

The protein resides in the cytoplasm. Functionally, functions in complex with FlhC as a master transcriptional regulator that regulates transcription of several flagellar and non-flagellar operons by binding to their promoter region. Activates expression of class 2 flagellar genes, including fliA, which is a flagellum-specific sigma factor that turns on the class 3 genes. Also regulates genes whose products function in a variety of physiological pathways. The polypeptide is Flagellar transcriptional regulator FlhD (Edwardsiella ictaluri (strain 93-146)).